A 136-amino-acid chain; its full sequence is Glycine-rich RNA-binding protein 4, mitochondrial (136 aa).

The transit peptide at 1 to 33 directs the protein to the mitochondrion; that stretch reads MAFCNKLSGILRQGVSQSSNGPVTSMLGSLRYM. Residues 35–113 enclose the RRM domain; that stretch reads SKLFVGGLSW…RQIRVNLATE (79 aa). At Ser43 the chain carries Phosphoserine. The disordered stretch occupies residues 113–136; that stretch reads ERSSAPRSSFGGGGGYGGGGGGGY. The span at 122–136 shows a compositional bias: gly residues; sequence FGGGGGYGGGGGGGY. The tract at residues 123–135 is glycine-rich (GR) required for cell-to-cell movement; that stretch reads GGGGGYGGGGGGG.

Belongs to the GR-RBP family. In terms of assembly, binds to small phloem-mobile single-stranded RNAs (ss-sRNA, e.g. small interfering RNA (siRNA) and microRNA (miRNA)) in the phloeme exudate, including viral-derived sRNA (vsiRNA). Abundantly expressed in young plants, root tips, and flowers, but weakly in mature leaves and stems, implying highly expression in actively proliferating organs.

The protein resides in the mitochondrion. It is found in the secreted. Functionally, possibly has a role in RNA transcription or processing during stress. Binds sequence non-specifically to RNAs and DNAs. Mediates cell-to-cell trafficking of RNA interference (RNAi) signals (small RNAs (sRNA), e.g. small interfering RNA (siRNA) and microRNA (miRNA)) which regulate growth and development, as well as responses to environmental inputs, including pathogen attack; can compromise zucchini yellow mosaic virus (ZYMV) and tobacco rattle virus (TRV) infections at the early stage. This Arabidopsis thaliana (Mouse-ear cress) protein is Glycine-rich RNA-binding protein 4, mitochondrial.